The sequence spans 371 residues: Cytoplasmic tRNA 2-thiolation protein 1 (371 aa).

Belongs to the TtcA family. CTU1/NCS6/ATPBD3 subfamily.

The protein resides in the cytoplasm. Its pathway is tRNA modification; 5-methoxycarbonylmethyl-2-thiouridine-tRNA biosynthesis. Functionally, plays a central role in 2-thiolation of mcm(5)S(2)U at tRNA wobble positions of tRNA(Lys), tRNA(Glu) and tRNA(Gln). Directly binds tRNAs and probably acts by catalyzing adenylation of tRNAs, an intermediate required for 2-thiolation. It is unclear whether it acts as a sulfurtransferase that transfers sulfur from thiocarboxylated URM1 onto the uridine of tRNAs at wobble position. Prior mcm(5) tRNA modification by the elongator complex is required for 2-thiolation. May also be involved in protein urmylation. The sequence is that of Cytoplasmic tRNA 2-thiolation protein 1 from Kluyveromyces lactis (strain ATCC 8585 / CBS 2359 / DSM 70799 / NBRC 1267 / NRRL Y-1140 / WM37) (Yeast).